Reading from the N-terminus, the 999-residue chain is Helicase required for RNAi-mediated heterochromatin assembly 1 (999 aa).

A disordered region spans residues 61 to 90 (EQIETSETSKTQDSEGNKVDKNLKENKSIR). The span at 70–88 (KTQDSEGNKVDKNLKENKS) shows a compositional bias: basic and acidic residues. Ser94 carries the phosphoserine modification. The span at 106–124 (RNDITSGKNREFENEHHPA) shows a compositional bias: basic and acidic residues. Residues 106-131 (RNDITSGKNREFENEHHPASDTSSWR) form a disordered region. Residue 393–400 (GPPGTGKS) participates in ATP binding.

As to quaternary structure, cid12, hrr1 and rdp1 interact forming the RNA-directed RNA polymerase complex (RDRC). The RDRC complex interacts with the RITS complex via interaction between ago1 and hrr1. Clr4 has a role in mediating this interaction.

It is found in the cytoplasm. It localises to the nucleus. The catalysed reaction is ATP + H2O = ADP + phosphate + H(+). Functionally, has a role in the RNA interference (RNAi) pathway which is important for heterochromatin formation and accurate chromosome segregation. A member of the RNA-directed RNA polymerase complex (RDRC) which is involved in the generation of small interfering RNAs (siRNAs) and mediate their association with the RNA-induced transcriptional silencing (RITS) complex. RITS acts as a priming complex for dsRNA synthesis at the site of non-coding centromeric RNA. This chain is Helicase required for RNAi-mediated heterochromatin assembly 1 (hrr1), found in Schizosaccharomyces pombe (strain 972 / ATCC 24843) (Fission yeast).